The primary structure comprises 509 residues: Ceramide glucosyltransferase (509 aa).

Residues 1 to 42 (MIMQLGLTSLAFLALKCDAYNIAPKIDTPNVEPFAPSGGLKL) are Lumenal-facing. Residues 43–63 (LAIVAIIWYVVVLLVAYYGFF) traverse the membrane as a helical segment. The Cytoplasmic segment spans residues 64 to 384 (EIMQKFSKRK…EATLLEPTTE (321 aa)). Asp123 is a short sequence motif (D1). Asp179 is a short sequence motif (D2). Asp321 is a short sequence motif (D3). Asp321 serves as the catalytic Proton acceptor. The short motif at 361–365 (RRIRW) is the (Q/R)XXRW element. Residues 385 to 405 (CLLCGTFGTFAISTLFLQSYF) traverse the membrane as a helical segment. The Lumenal segment spans residues 406–408 (NWK). The helical transmembrane segment at 409 to 429 (FFIFHLLVWMVTDYTQFHILL) threads the bilayer. At 430–466 (TNASQDTATCNVPYFAEPNFNAYGSPFESSNLRTFHR) the chain is on the cytoplasmic side. A helical membrane pass occupies residues 467-487 (WVLYWLLREVLALPIWISAML). Topologically, residues 488-509 (GTRIIWRNRPFRINVDLSAEEL) are lumenal.

The protein belongs to the glycosyltransferase 2 family.

The protein resides in the golgi apparatus membrane. The catalysed reaction is an N-acylsphing-4-enine + UDP-alpha-D-glucose = a beta-D-glucosyl-(1&lt;-&gt;1')-N-acylsphing-4-enine + UDP + H(+). The protein operates within lipid metabolism; sphingolipid metabolism. In terms of biological role, catalyzes the final step in the biosynthesis of the membrane lipid glucosylceramide (GluCer), the transfer of glucose to ceramide. Glucosylceramides play important roles in growth, differentiation and pathogenicity. The protein is Ceramide glucosyltransferase of Komagataella phaffii (strain GS115 / ATCC 20864) (Yeast).